The following is a 177-amino-acid chain: Adenine phosphoribosyltransferase (177 aa).

This sequence belongs to the purine/pyrimidine phosphoribosyltransferase family. Homodimer.

It is found in the cytoplasm. It catalyses the reaction AMP + diphosphate = 5-phospho-alpha-D-ribose 1-diphosphate + adenine. The protein operates within purine metabolism; AMP biosynthesis via salvage pathway; AMP from adenine: step 1/1. Catalyzes a salvage reaction resulting in the formation of AMP, that is energically less costly than de novo synthesis. The chain is Adenine phosphoribosyltransferase from Leuconostoc citreum (strain KM20).